A 186-amino-acid polypeptide reads, in one-letter code: Peptidyl-tRNA hydrolase (186 aa).

Y14 provides a ligand contact to tRNA. H19 (proton acceptor) is an active-site residue. The tRNA site is built by Y64, N66, and N112.

The protein belongs to the PTH family. As to quaternary structure, monomer.

The protein localises to the cytoplasm. The enzyme catalyses an N-acyl-L-alpha-aminoacyl-tRNA + H2O = an N-acyl-L-amino acid + a tRNA + H(+). Hydrolyzes ribosome-free peptidyl-tRNAs (with 1 or more amino acids incorporated), which drop off the ribosome during protein synthesis, or as a result of ribosome stalling. Functionally, catalyzes the release of premature peptidyl moieties from peptidyl-tRNA molecules trapped in stalled 50S ribosomal subunits, and thus maintains levels of free tRNAs and 50S ribosomes. The sequence is that of Peptidyl-tRNA hydrolase from Lachnospira eligens (strain ATCC 27750 / DSM 3376 / VPI C15-48 / C15-B4) (Eubacterium eligens).